The sequence spans 81 residues: Apolipoprotein C-I, acidic form (81 aa).

A signal peptide spans 1–24; it reads MRLFLSLLVVVLSIVLEGPTPAQG.

This sequence belongs to the apolipoprotein C1 family.

The protein resides in the secreted. The chain is Apolipoprotein C-I, acidic form (APOC1A) from Cercocebus atys (Sooty mangabey).